Here is a 536-residue protein sequence, read N- to C-terminus: Membrane protein insertase YidC (536 aa).

Residues 7 to 27 form a helical membrane-spanning segment; that stretch reads IIAVVLSLFVLIGWSYLSEFM. The disordered stretch occupies residues 43-70; the sequence is VQQKASEPVAQPVQTASAPAASSFAPTE. The span at 58–68 shows a compositional bias: low complexity; that stretch reads ASAPAASSFAP. Helical transmembrane passes span 346-366, 415-435, and 495-515; these read GNYG…FWPL, GGCL…QGLL, and IMMF…AGLV.

This sequence belongs to the OXA1/ALB3/YidC family. Type 1 subfamily. As to quaternary structure, interacts with the Sec translocase complex via SecD. Specifically interacts with transmembrane segments of nascent integral membrane proteins during membrane integration.

It localises to the cell inner membrane. Functionally, required for the insertion and/or proper folding and/or complex formation of integral membrane proteins into the membrane. Involved in integration of membrane proteins that insert both dependently and independently of the Sec translocase complex, as well as at least some lipoproteins. Aids folding of multispanning membrane proteins. In Oleidesulfovibrio alaskensis (strain ATCC BAA-1058 / DSM 17464 / G20) (Desulfovibrio alaskensis), this protein is Membrane protein insertase YidC.